Here is a 237-residue protein sequence, read N- to C-terminus: Keratin-associated protein 5-5 (237 aa).

8 repeat units span residues 62–65, 68–71, 74–77, 159–162, 178–181, 188–191, 198–201, and 227–230. Residues 62-230 form an 8 X 4 AA repeats of C-C-X-P region; sequence CCVPVCCCKP…CCCQSSCCVP (169 aa).

Belongs to the KRTAP type 5 family. Interacts with hair keratins. In terms of tissue distribution, restricted to hair root, not detected in any other tissues.

Its function is as follows. In the hair cortex, hair keratin intermediate filaments are embedded in an interfilamentous matrix, consisting of hair keratin-associated protein (KRTAP), which are essential for the formation of a rigid and resistant hair shaft through their extensive disulfide bond cross-linking with abundant cysteine residues of hair keratins. The matrix proteins include the high-sulfur and high-glycine-tyrosine keratins. This chain is Keratin-associated protein 5-5 (KRTAP5-5), found in Homo sapiens (Human).